The primary structure comprises 775 residues: 5-methyltetrahydropteroyltriglutamate--homocysteine methyltransferase (775 aa).

Residues 15–18 and Lys118 contribute to the 5-methyltetrahydropteroyltri-L-glutamate site; that span reads RELK. Residues 448–450 and Glu501 each bind L-homocysteine; that span reads IGS. Residues 448–450 and Glu501 each bind L-methionine; that span reads IGS. Residues 532–533 and Trp578 each bind 5-methyltetrahydropteroyltri-L-glutamate; that span reads RC. Asp616 contributes to the L-homocysteine binding site. Asp616 contributes to the L-methionine binding site. Glu622 serves as a coordination point for 5-methyltetrahydropteroyltri-L-glutamate. Positions 658, 660, and 682 each coordinate Zn(2+). His711 serves as the catalytic Proton donor. A Zn(2+)-binding site is contributed by Cys743.

The protein belongs to the vitamin-B12 independent methionine synthase family. The cofactor is Zn(2+).

The enzyme catalyses 5-methyltetrahydropteroyltri-L-glutamate + L-homocysteine = tetrahydropteroyltri-L-glutamate + L-methionine. The protein operates within amino-acid biosynthesis; L-methionine biosynthesis via de novo pathway; L-methionine from L-homocysteine (MetE route): step 1/1. Its function is as follows. Catalyzes the transfer of a methyl group from 5-methyltetrahydrofolate to homocysteine resulting in methionine formation. This is 5-methyltetrahydropteroyltriglutamate--homocysteine methyltransferase from Cytophaga hutchinsonii (strain ATCC 33406 / DSM 1761 / CIP 103989 / NBRC 15051 / NCIMB 9469 / D465).